Here is a 179-residue protein sequence, read N- to C-terminus: MIFYLHGFDATSPGNHEKMRQLQFIDPDVRLISYSTLHPKHDMQHLLKEVAKQMQYCDDPAPLMVGVGLGAYWAERIGFLNGLKSVLINPNLHPEETMQGKIDRPEEYADIANKCVSEFRLKNTHKAMCILSRVDEVLDSEATAEALKPYYTIEWDETQTHKFPQLAAHLPKIKAFKLG.

Belongs to the UPF0227 family.

The sequence is that of UPF0227 protein Shewmr4_1727 from Shewanella sp. (strain MR-4).